The sequence spans 778 residues: Endonuclease MutS2 (778 aa).

Residue 328-335 participates in ATP binding; the sequence is GPNTGGKT. The region spanning 702 to 777 is the Smr domain; sequence LDLRGKRYEE…GSGATIVTFK (76 aa).

The protein belongs to the DNA mismatch repair MutS family. MutS2 subfamily. Homodimer. Binds to stalled ribosomes, contacting rRNA.

In terms of biological role, endonuclease that is involved in the suppression of homologous recombination and thus may have a key role in the control of bacterial genetic diversity. Its function is as follows. Acts as a ribosome collision sensor, splitting the ribosome into its 2 subunits. Detects stalled/collided 70S ribosomes which it binds and splits by an ATP-hydrolysis driven conformational change. Acts upstream of the ribosome quality control system (RQC), a ribosome-associated complex that mediates the extraction of incompletely synthesized nascent chains from stalled ribosomes and their subsequent degradation. Probably generates substrates for RQC. This chain is Endonuclease MutS2, found in Streptococcus pneumoniae (strain 70585).